Consider the following 369-residue polypeptide: S-(hydroxymethyl)glutathione dehydrogenase (369 aa).

Residues C40, H62, C92, C95, C98, C106, and C169 each coordinate Zn(2+).

The protein belongs to the zinc-containing alcohol dehydrogenase family. Class-III subfamily. In terms of assembly, homodimer. Zn(2+) is required as a cofactor.

It localises to the cytoplasm. The catalysed reaction is S-(hydroxymethyl)glutathione + NADP(+) = S-formylglutathione + NADPH + H(+). The enzyme catalyses S-(hydroxymethyl)glutathione + NAD(+) = S-formylglutathione + NADH + H(+). It carries out the reaction a primary alcohol + NAD(+) = an aldehyde + NADH + H(+). It catalyses the reaction a secondary alcohol + NAD(+) = a ketone + NADH + H(+). The catalysed reaction is S-nitrosoglutathione + NADH + H(+) = S-(hydroxysulfenamide)glutathione + NAD(+). In terms of biological role, has high formaldehyde dehydrogenase activity in the presence of glutathione and catalyzes the oxidation of normal alcohols in a reaction that is not GSH-dependent. In addition, hemithiolacetals other than those formed from GSH, including omega-thiol fatty acids, also are substrates. Also acts as a S-nitroso-glutathione reductase by catalyzing the NADH-dependent reduction of S-nitrosoglutathione. This chain is S-(hydroxymethyl)glutathione dehydrogenase (frmA), found in Escherichia coli O1:K1 / APEC.